A 281-amino-acid chain; its full sequence is MALYCVGDIQGCDDAFERLLATIGFSPSRDALYVLGDLVNRGPDSAAVLRRCITLGDSVRPLLGNHDLHLLAAAYGTRRPSRRDTLQGILLAPDRDEMLEWLRHQPLARRVHHGGGDLLMVHAGVLPQWTAEETLAYAGEVEAVLQSREFAGFLQQMYGNSPDLWSPELQGTDRLRVIVNALTRMRFCSPEGRMDFESTESASEAPPGLVPWFDAPGRRTLNTLIAFGHWSTLGWLDRADVLGLDTGCVWGGCLSAVRFGTTLADRERYHVECPQAQMPGA.

It belongs to the Ap4A hydrolase family.

The catalysed reaction is P(1),P(4)-bis(5'-adenosyl) tetraphosphate + H2O = 2 ADP + 2 H(+). Hydrolyzes diadenosine 5',5'''-P1,P4-tetraphosphate to yield ADP. This Acidovorax sp. (strain JS42) protein is Bis(5'-nucleosyl)-tetraphosphatase, symmetrical.